We begin with the raw amino-acid sequence, 109 residues long: Small ribosomal subunit protein uS10 (109 aa).

This sequence belongs to the universal ribosomal protein uS10 family. In terms of assembly, part of the 30S ribosomal subunit.

Functionally, involved in the binding of tRNA to the ribosomes. The polypeptide is Small ribosomal subunit protein uS10 (Koribacter versatilis (strain Ellin345)).